We begin with the raw amino-acid sequence, 347 residues long: Protein XRP2 (347 aa).

The segment covering 1-11 (MGCCFTKRRKS) has biased composition (basic residues). The segment at 1–22 (MGCCFTKRRKSEKAEGEEEQPK) is disordered. Gly-2 is lipidated: N-myristoyl glycine. Cys-3 carries S-palmitoyl cysteine lipidation. Residues 21-176 (PKLYSWDQRE…IWSHVHDFTP (156 aa)) form the C-CAP/cofactor C-like domain. GTP contacts are provided by residues 95–96 (GS) and 112–115 (QQFR).

This sequence belongs to the TBCC family. As to quaternary structure, found in a complex with ARL3, RP2 and UNC119 (or UNC119B); RP2 induces hydrolysis of GTP ARL3 in the complex, leading to the release of UNC119 (or UNC119B). Interacts with ARL3; interaction is direct and stimulated with the activated GTP-bound form of ARL3. Post-translationally, myristoylated on Gly-2; which may be required for membrane targeting. In terms of processing, palmitoylated on Cys-3; which may be required for plasma membrane targeting. As to expression, retina (at protein level).

It localises to the cell membrane. It is found in the cell projection. The protein localises to the cilium. Acts as a GTPase-activating protein (GAP) involved in trafficking between the Golgi and the ciliary membrane. Involved in localization of proteins, such as NPHP3, to the cilium membrane by inducing hydrolysis of GTP ARL3, leading to the release of UNC119 (or UNC119B). Acts as a GTPase-activating protein (GAP) for tubulin in concert with tubulin-specific chaperone C, but does not enhance tubulin heterodimerization. Acts as a guanine nucleotide dissociation inhibitor towards ADP-ribosylation factor-like proteins. In Mus musculus (Mouse), this protein is Protein XRP2 (Rp2).